Here is a 259-residue protein sequence, read N- to C-terminus: Ras-related protein Rab-34 (259 aa).

Met-1 carries the post-translational modification N-acetylmethionine. Ser-62, Val-63, Gly-64, Lys-65, Thr-66, Asp-78, Tyr-81, and Thr-84 together coordinate GTP. Mg(2+) is bound at residue Thr-66. The short motif at 71–89 (RFCKDTFDKNYKATIGVDF) is the Switch 1 element. Thr-84 and Asp-107 together coordinate Mg(2+). The Switch 2 signature appears at 108–127 (TAGQERFKCIASTYYRGAQA). Gly-110, Lys-167, Asp-169, and Ser-198 together coordinate GTP. A Phosphoserine modification is found at Ser-241. 2 S-geranylgeranyl cysteine lipidation sites follow: Cys-257 and Cys-258.

The protein belongs to the small GTPase superfamily. Rab family. Interacts with RILP. The GTP-bound form interacts with REP15. The cofactor is Mg(2+).

The protein localises to the cytoplasm. It localises to the golgi apparatus. The protein resides in the cytoplasmic vesicle. It is found in the phagosome. Its subcellular location is the phagosome membrane. The protein localises to the cell projection. It localises to the cilium. The protein resides in the cytoskeleton. It is found in the microtubule organizing center. Its subcellular location is the centrosome. The protein localises to the centriole. It catalyses the reaction GTP + H2O = GDP + phosphate + H(+). Regulated by guanine nucleotide exchange factors (GEFs) which promote the exchange of bound GDP for free GTP. Regulated by GTPase activating proteins (GAPs) which increase the GTP hydrolysis activity. Inhibited by GDP dissociation inhibitors (GDIs). Its function is as follows. The small GTPases Rab are key regulators of intracellular membrane trafficking, from the formation of transport vesicles to their fusion with membranes. Rabs cycle between an inactive GDP-bound form and an active GTP-bound form that is able to recruit to membranes different sets of downstream effectors directly responsible for vesicle formation, movement, tethering and fusion. RAB34 transports protein involved in the redistribution of lysosomes to the peri-Golgi region. Plays a role in the maturation of phagosomes that engulf pathogens, such as S.aureus and M.tuberculosis. Plays a role in the fusion of phagosomes with lysosomes. Involved in ciliogenesis. In particular, it is required for early steps of the intracellular cilium assembly pathway initiated by trafficking and docking of ciliary vesicles to the centrioles in the cytoplasm, followed by axoneme formation in the cytoplasm. After axoneme elongation, the centrioles migrate close to the cell surface so that ciliary vesicles can fuse with the plasma membrane to expose cilia to the extracellular space. It seems dispensable for ciliogenesis via the extracellular pathway where cilium assembly begins after migration and docking of the centriole to the plasma membrane. Also acts as a positive regulator of hedgehog signaling and regulates ciliary function. This is Ras-related protein Rab-34 from Rattus norvegicus (Rat).